The sequence spans 267 residues: Putative transcription factor Ovo-like 1 (267 aa).

4 C2H2-type zinc fingers span residues 118-140, 146-168, 174-197, and 213-235; these read FTCHICQKAFTYQRMLNRHMKCH, HLCTYCGKGFNDTFDLKRHVRTH, YKCSLCDKAFTQRCSLESHLKKIH, and YVCEECGCTSESQEGHVLHLKEH.

The protein localises to the nucleus. Putative transcription factor. Involved in hair formation and spermatogenesis. May function in the differentiation and/or maintenance of the urogenital system. The sequence is that of Putative transcription factor Ovo-like 1 (OVOL1) from Bos taurus (Bovine).